Reading from the N-terminus, the 935-residue chain is DNA repair protein rev1 (935 aa).

The BRCT domain maps to 59–147; the sequence is SKSDLFHGLA…KILPWINYRT (89 aa). Residues 162-178 show a composition bias toward polar residues; the sequence is SKPSQPEGNLEDIQTSS. The tract at residues 162-193 is disordered; the sequence is SKPSQPEGNLEDIQTSSQEEEHDNEKDKTKES. The segment covering 184-193 has biased composition (basic and acidic residues); the sequence is DNEKDKTKES. The interval 235–245 is interaction with target DNA; sequence FFSSSRLHHLS. DCTP is bound by residues Arg240 and 283 to 287; that span reads DFDCF. One can recognise a UmuC domain in the interval 279 to 460; it reads LLHVDFDCFF…LSVQDLPGVG (182 aa). Mg(2+) is bound by residues Asp283 and Phe284. Residues 310-312 form an interaction with target DNA region; it reads IKN. DCTP contacts are provided by residues 317 to 323, Asn329, and Asp378; that span reads SCNYEAR. Positions 378 and 379 each coordinate Mg(2+). Interaction with target DNA regions lie at residues 460 to 463 and 517 to 525; these read GSSQ and RRSISVDVN.

The protein belongs to the DNA polymerase type-Y family. Requires Mg(2+) as cofactor.

It localises to the nucleus. It is found in the nucleolus. The protein resides in the mitochondrion. Its subcellular location is the cytoplasm. The protein localises to the cytoskeleton. It localises to the spindle. Functionally, deoxycytidyl transferase involved in DNA repair. Transfers a dCMP residue from dCTP to the 3'-end of a DNA primer in a template-dependent reaction. May assist in the first step in the bypass of abasic lesions by the insertion of a nucleotide opposite the lesion. Required for normal induction of mutations by physical and chemical agents. Involved in mitochondrial DNA mutagenesis. The protein is DNA repair protein rev1 of Schizosaccharomyces pombe (strain 972 / ATCC 24843) (Fission yeast).